A 367-amino-acid polypeptide reads, in one-letter code: DNA replication and repair protein RecF (367 aa).

30 to 37 (GANGSGKT) serves as a coordination point for ATP.

This sequence belongs to the RecF family.

It localises to the cytoplasm. Its function is as follows. The RecF protein is involved in DNA metabolism; it is required for DNA replication and normal SOS inducibility. RecF binds preferentially to single-stranded, linear DNA. It also seems to bind ATP. This is DNA replication and repair protein RecF from Pseudomonas putida (strain ATCC 47054 / DSM 6125 / CFBP 8728 / NCIMB 11950 / KT2440).